Consider the following 561-residue polypeptide: Tectonic-like complex member MKS1 (561 aa).

The C2 B9-type domain occupies 314–442 (LRLFVNGEVV…TASTWRPMEL (129 aa)).

In terms of assembly, part of the tectonic-like complex (also named B9 complex). Interacts with TMEM107. Interacts with TCTN3, AHI1, TCTN1, TCTN2, CC2D2A. Interacts with FLNA. Interacts with TMEM67. Interacts with B9D1 and B9D2.

Its subcellular location is the cytoplasm. The protein resides in the cytoskeleton. It is found in the cilium basal body. It localises to the microtubule organizing center. The protein localises to the centrosome. In terms of biological role, component of the tectonic-like complex, a complex localized at the transition zone of primary cilia and acting as a barrier that prevents diffusion of transmembrane proteins between the cilia and plasma membranes. Involved in centrosome migration to the apical cell surface during early ciliogenesis. Required for ciliary structure and function, including a role in regulating length and appropriate number through modulating centrosome duplication. Required for cell branching morphology. The polypeptide is Tectonic-like complex member MKS1 (Mks1) (Rattus norvegicus (Rat)).